We begin with the raw amino-acid sequence, 142 residues long: VapC ribonuclease R02377 (142 aa).

One can recognise a PINc domain in the interval 3-140 (FVDGSVIVAI…YKGNDFSQTD (138 aa)). 2 residues coordinate Mg(2+): Asp5 and Asp115.

Belongs to the PINc/VapC protein family. Mg(2+) is required as a cofactor.

Its function is as follows. Toxic component of a type II toxin-antitoxin (TA) system. An RNase. The chain is VapC ribonuclease R02377 from Rhizobium meliloti (strain 1021) (Ensifer meliloti).